The sequence spans 1863 residues: 5'-3' DNA helicase ZGRF1 (1863 aa).

Disordered stretches follow at residues 78–110 (SRAV…QPSG), 132–196 (ENSE…PLSL), and 300–349 (TQSI…PEAQ). The span at 81–90 (VEPDGSREAL) shows a compositional bias: basic and acidic residues. A compositionally biased stretch (low complexity) spans 92 to 105 (SGSRTLVSSSRSLG). 2 stretches are compositionally biased toward polar residues: residues 173–185 (PVST…ITFS) and 300–321 (TQSI…TTSR). A phosphoserine mark is found at S331 and S445. Disordered stretches follow at residues 460–496 (PVSP…SKSN), 524–545 (TSDT…ERWE), and 610–664 (GDVK…GVSP). Over residues 533–545 (EDSRLSQDSERWE) the composition is skewed to basic and acidic residues. Residues C1111, H1113, C1136, and C1144 each contribute to the Zn(2+) site. The segment at 1111–1153 (CHHNQPAKLVMVKKEGPNKGRLFYTCDKSKDNQCKFFKWLEEV) adopts a GRF-type zinc-finger fold.

Interacts with DNA repair protein RAD51; the interaction promotes RAD51 strand exchange activity. Also interacts with DNA repair proteins EXO1 and BRCA1; the interactions are increased following DNA damage induction.

It localises to the nucleus. It carries out the reaction ATP + H2O = ADP + phosphate + H(+). The catalysed reaction is Couples ATP hydrolysis with the unwinding of duplex DNA at the replication fork by translocating in the 5'-3' direction. This creates two antiparallel DNA single strands (ssDNA). The leading ssDNA polymer is the template for DNA polymerase III holoenzyme which synthesizes a continuous strand.. In terms of biological role, 5'-3' DNA helicase which is recruited to sites of DNA damage and promotes repair of replication-blocking DNA lesions through stimulation of homologous recombination (HR). Promotes HR by directly stimulating RAD51-mediated strand exchange activity. Not required to load RAD51 at sites of DNA damage but promotes recombinational repair after RAD51 recruitment. Also promotes HR by positively regulating EXO1-mediated DNA end resection of DNA double-strand breaks. Required for recruitment of replication protein RPA2 to DNA damage sites. Promotes the initiation of the G2/M checkpoint but not its maintenance. Catalyzes Holliday junction branch migration and dissociation of D-loops and DNA flaps. This is 5'-3' DNA helicase ZGRF1 (Zgrf1) from Mus musculus (Mouse).